The primary structure comprises 751 residues: Diamine oxidase [copper-containing] (751 aa).

An N-terminal signal peptide occupies residues 1–19 (MPALGWAVAAILMLQTAMA). Residues asparagine 110 and asparagine 168 are each glycosylated (N-linked (GlcNAc...) asparagine). A disulfide bridge connects residues cysteine 177 and cysteine 181. Aspartate 373 functions as the Proton acceptor in the catalytic mechanism. An intrachain disulfide couples cysteine 391 to cysteine 417. Tyrosine 461 (schiff-base intermediate with substrate; via topaquinone) is an active-site residue. Tyrosine 461 carries the post-translational modification 2',4',5'-topaquinone. The Cu(2+) site is built by histidine 510 and histidine 512. Ca(2+) is bound by residues aspartate 519, leucine 520, and aspartate 521. Asparagine 538 carries an N-linked (GlcNAc...) asparagine glycan. Positions 562, 653, 656, 658, 664, and 665 each coordinate Ca(2+). Histidine 675 lines the Cu(2+) pocket. Residue asparagine 745 is glycosylated (N-linked (GlcNAc...) asparagine).

The protein belongs to the copper/topaquinone oxidase family. As to quaternary structure, homodimer; disulfide-linked. The cofactor is Cu(2+). Ca(2+) is required as a cofactor. It depends on L-topaquinone as a cofactor. Post-translationally, N-glycosylated. Topaquinone (TPQ) is generated by copper-dependent autoxidation of a specific tyrosyl residue. Widely expressed with higher expression in placenta and kidney.

It is found in the secreted. Its subcellular location is the extracellular space. The protein resides in the cell membrane. The enzyme catalyses histamine + O2 + H2O = imidazole-4-acetaldehyde + H2O2 + NH4(+). It carries out the reaction N(tau)-methylhistamine + O2 + H2O = 1-methylimidazole-4-acetaldehyde + H2O2 + NH4(+). The catalysed reaction is putrescine + O2 + H2O = 4-aminobutanal + H2O2 + NH4(+). It catalyses the reaction cadaverine + O2 + H2O = 5-aminopentanal + H2O2 + NH4(+). Its activity is regulated as follows. Inhibited by amiloride and amiloride analogs. Inhibited by isoniazid, cimetidine, clonidine, berenil and pentamidine. Its function is as follows. Catalyzes the oxidative deamination of primary amines to the corresponding aldehydes with the concomitant production of hydrogen peroxide and ammonia. Its preferred substrates are the diamines histamine and 1-methylhistamine and it could therefore play a role in allergic and immune responses. Has a broad specificity for diamines and can also act on cadaverine and putrescine, two products of amino acid catabolism. It could also act on polyamines, like spermidine and spermine though less efficiently, and regulate various biological processes. In Homo sapiens (Human), this protein is Diamine oxidase [copper-containing].